The chain runs to 252 residues: Trans-aconitate 2-methyltransferase (252 aa).

It belongs to the methyltransferase superfamily. Tam family.

It localises to the cytoplasm. The catalysed reaction is trans-aconitate + S-adenosyl-L-methionine = (E)-3-(methoxycarbonyl)pent-2-enedioate + S-adenosyl-L-homocysteine. Functionally, catalyzes the S-adenosylmethionine monomethyl esterification of trans-aconitate. In Escherichia coli O6:H1 (strain CFT073 / ATCC 700928 / UPEC), this protein is Trans-aconitate 2-methyltransferase.